We begin with the raw amino-acid sequence, 227 residues long: Small ribosomal subunit protein uS5 (227 aa).

The tract at residues 1–22 (MSKRSNRSNNKNNTNKFNIENW) is disordered. Positions 7–18 (RSNNKNNTNKFN) are enriched in low complexity. The region spanning 63–126 (LEEEVMDVNL…DAAKYNLIKV (64 aa)) is the S5 DRBM domain.

Belongs to the universal ribosomal protein uS5 family. Part of the 30S ribosomal subunit. Contacts protein S4.

Functionally, with S4 and S12 plays an important role in translational accuracy. The sequence is that of Small ribosomal subunit protein uS5 from Methanosphaera stadtmanae (strain ATCC 43021 / DSM 3091 / JCM 11832 / MCB-3).